We begin with the raw amino-acid sequence, 59 residues long: Embryonic testis differentiation protein homolog A (59 aa).

Positions 1–10 are enriched in basic and acidic residues; that stretch reads MDKEVPKGSP. Positions 1–25 are disordered; sequence MDKEVPKGSPREPALNIKKSDKSFK.

The sequence is that of Embryonic testis differentiation protein homolog A from Homo sapiens (Human).